A 112-amino-acid polypeptide reads, in one-letter code: Small ribosomal subunit protein bS6 (112 aa).

Belongs to the bacterial ribosomal protein bS6 family.

In terms of biological role, binds together with bS18 to 16S ribosomal RNA. This chain is Small ribosomal subunit protein bS6 (rpsF), found in Chlamydia pneumoniae (Chlamydophila pneumoniae).